Here is a 300-residue protein sequence, read N- to C-terminus: Transcription initiation factor IIB (300 aa).

The segment at 2–34 adopts a TFIIB-type zinc-finger fold; that stretch reads TKQKVCPVCGSTEFIYDPERGEIVCARCGYVIE. Residues cysteine 7, cysteine 10, cysteine 26, and cysteine 29 each contribute to the Zn(2+) site. 2 consecutive repeat copies span residues 114-197 and 210-291.

The protein belongs to the TFIIB family.

Functionally, stabilizes TBP binding to an archaeal box-A promoter. Also responsible for recruiting RNA polymerase II to the pre-initiation complex (DNA-TBP-TFIIB). This chain is Transcription initiation factor IIB, found in Pyrococcus horikoshii (strain ATCC 700860 / DSM 12428 / JCM 9974 / NBRC 100139 / OT-3).